The sequence spans 678 residues: DNA ligase (678 aa).

NAD(+)-binding positions include 47-51 (DSDYD), 96-97 (SL), and Glu-122. Lys-124 acts as the N6-AMP-lysine intermediate in catalysis. NAD(+)-binding residues include Arg-145, Glu-182, Lys-300, and Lys-324. Cys-418, Cys-421, Cys-436, and Cys-442 together coordinate Zn(2+). The BRCT domain maps to 602-678 (AYNESFTGKT…ILEDNLKDLL (77 aa)).

It belongs to the NAD-dependent DNA ligase family. LigA subfamily. The cofactor is Mg(2+). Mn(2+) is required as a cofactor.

It carries out the reaction NAD(+) + (deoxyribonucleotide)n-3'-hydroxyl + 5'-phospho-(deoxyribonucleotide)m = (deoxyribonucleotide)n+m + AMP + beta-nicotinamide D-nucleotide.. Functionally, DNA ligase that catalyzes the formation of phosphodiester linkages between 5'-phosphoryl and 3'-hydroxyl groups in double-stranded DNA using NAD as a coenzyme and as the energy source for the reaction. It is essential for DNA replication and repair of damaged DNA. The protein is DNA ligase of Francisella tularensis subsp. holarctica (strain LVS).